The primary structure comprises 979 residues: Translation initiation factor IF-2 (979 aa).

The interval 68–386 (VKQKQGTPAS…DKRDAASRAA (319 aa)) is disordered. Basic and acidic residues-rich tracts occupy residues 102 to 179 (QDMR…KPEE), 217 to 229 (EMEK…EVFR), and 260 to 273 (TKED…DADG). A compositionally biased stretch (polar residues) spans 317–326 (RPAQQQSNAS). Basic and acidic residues predominate over residues 347 to 356 (DVQRQVKETL). A tr-type G domain is found at 478-646 (ARPPIVTVMG…KVLLEADILE (169 aa)). Residues 487 to 494 (GHVDHGKT) are G1. Residue 487-494 (GHVDHGKT) coordinates GTP. Positions 512-516 (GITQH) are G2. The segment at 534-537 (DTPG) is G3. GTP contacts are provided by residues 534–538 (DTPGH) and 588–591 (NKID). The interval 588-591 (NKID) is G4. The segment at 624 to 626 (SAK) is G5.

Belongs to the TRAFAC class translation factor GTPase superfamily. Classic translation factor GTPase family. IF-2 subfamily.

Its subcellular location is the cytoplasm. In terms of biological role, one of the essential components for the initiation of protein synthesis. Protects formylmethionyl-tRNA from spontaneous hydrolysis and promotes its binding to the 30S ribosomal subunits. Also involved in the hydrolysis of GTP during the formation of the 70S ribosomal complex. The chain is Translation initiation factor IF-2 from Porphyromonas gingivalis (strain ATCC BAA-308 / W83).